The primary structure comprises 343 residues: Heat-inducible transcription repressor HrcA (343 aa).

It belongs to the HrcA family.

Negative regulator of class I heat shock genes (grpE-dnaK-dnaJ and groELS operons). Prevents heat-shock induction of these operons. The chain is Heat-inducible transcription repressor HrcA from Mycolicibacterium vanbaalenii (strain DSM 7251 / JCM 13017 / BCRC 16820 / KCTC 9966 / NRRL B-24157 / PYR-1) (Mycobacterium vanbaalenii).